The chain runs to 130 residues: Large ribosomal subunit protein bL12c (130 aa).

This sequence belongs to the bacterial ribosomal protein bL12 family. As to quaternary structure, homodimer. Part of the ribosomal stalk of the 50S ribosomal subunit. Forms a multimeric L10(L12)X complex, where L10 forms an elongated spine to which 2 to 4 L12 dimers bind in a sequential fashion. Binds GTP-bound translation factors.

The protein resides in the plastid. Its function is as follows. Forms part of the ribosomal stalk which helps the ribosome interact with GTP-bound translation factors. Is thus essential for accurate translation. The protein is Large ribosomal subunit protein bL12c of Prototheca wickerhamii.